Consider the following 432-residue polypeptide: MTLWVLGLNHQTAPVDLRERAAFAGDALPRALESLRALPQVSEAALLSTCNRTELYAMADEARSLVNWLETHAPGLSGYLYQHQEAEAVRHLFRVATGLDSMVLGEPQILGQVKDAWAVARAHGALGSGLDRLFQQTFSVAKRARTDTRVGANPVSVASTAVRLAQESFARLNESTVLLIGAGETIELAAKHLSEGRVRRLLIANRTLAHAQTLASQHGGYALPLTDLERHLAEADVVFSATAAREPLVTRVQVEQALRARKRKPMLLFDLAVPRDIEASVDELSDAYLYTVDDLERAVEDNRRGRREAADQAEAIIDLQVARYVETLQATTRQAPLKRLRAFGDSTRDELLAKARQQLHNGKPTDEVLEQLAHALTNRLLHPPTAALRDAALNNDLELTTAADRLFPEKPGYQHPPIATPIVRTDDADPAP.

Substrate is bound by residues 49 to 52 (TCNR), S101, 106 to 108 (EPQ), and Q112. C50 functions as the Nucleophile in the catalytic mechanism. 181-186 (GAGETI) serves as a coordination point for NADP(+). The disordered stretch occupies residues 407-432 (FPEKPGYQHPPIATPIVRTDDADPAP).

It belongs to the glutamyl-tRNA reductase family. As to quaternary structure, homodimer.

The enzyme catalyses (S)-4-amino-5-oxopentanoate + tRNA(Glu) + NADP(+) = L-glutamyl-tRNA(Glu) + NADPH + H(+). Its pathway is porphyrin-containing compound metabolism; protoporphyrin-IX biosynthesis; 5-aminolevulinate from L-glutamyl-tRNA(Glu): step 1/2. In terms of biological role, catalyzes the NADPH-dependent reduction of glutamyl-tRNA(Glu) to glutamate 1-semialdehyde (GSA). The chain is Glutamyl-tRNA reductase from Xanthomonas oryzae pv. oryzae (strain PXO99A).